Here is a 439-residue protein sequence, read N- to C-terminus: Histone acetyltransferase ESA1 (439 aa).

Residues 23–73 (VGCKSWVLKDGQDRLAEILSINSRRDPPKFYVHYEDFNKRLDEWITADRLQ) form the Tudor-knot domain. The interval 83 to 120 (PKELEEKKDSKKKKQQQNKSATPQAASATPDGGDVMDL) is disordered. The MYST-type HAT domain occupies 156–427 (ARVRNLNKVI…IDPQKLIWTP (272 aa)). The C2HC MYST-type; degenerate zinc-finger motif lies at 189 to 214 (VYIDDFSLQYFGSKKQYERYRKKCTL). Positions 239 to 260 (RTWCRNLCLLSKLFLDHKTLYY) match the ESA1-RPD3 motif motif. An N6-acetyllysine; by autocatalysis modification is found at K256. Acetyl-CoA-binding positions include 297–301 (ACILT) and 306–312 (QRMGYGR). E332 acts as the Proton donor/acceptor in catalysis. S336 contributes to the acetyl-CoA binding site.

This sequence belongs to the MYST (SAS/MOZ) family. Component of the NuA4 histone acetyltransferase complex. In terms of processing, autoacetylation at Lys-256 is required for proper function.

It is found in the nucleus. It localises to the chromosome. The enzyme catalyses L-lysyl-[histone] + acetyl-CoA = N(6)-acetyl-L-lysyl-[histone] + CoA + H(+). The catalysed reaction is L-lysyl-[protein] + acetyl-CoA = N(6)-acetyl-L-lysyl-[protein] + CoA + H(+). It catalyses the reaction 2-hydroxyisobutanoyl-CoA + L-lysyl-[protein] = N(6)-(2-hydroxyisobutanoyl)-L-lysyl-[protein] + CoA + H(+). It carries out the reaction (2E)-butenoyl-CoA + L-lysyl-[protein] = N(6)-(2E)-butenoyl-L-lysyl-[protein] + CoA + H(+). In terms of biological role, catalytic component of the NuA4 histone acetyltransferase (HAT) complex which is involved in epigenetic transcriptional activation of selected genes principally by acetylation of nucleosomal histones H4, H3, H2B, H2A and H2A variant H2A.Z. Acetylates histone H4 to form H4K5ac, H4K8ac, H4K12ac and H4K16ac, histone H3 to form H3K14ac, and histone H2A to form H2AK4ac and H2AK7ac. The NuA4 complex is involved in the DNA damage response and is required for chromosome segregation. The NuA4 complex plays a direct role in repair of DNA double-strand breaks (DSBs) through homologous recombination. Recruitment to promoters depends on H3K4me. Also acetylates non-histone proteins. In addition to protein acetyltransferase, can use different acyl-CoA substrates, such as 2-hydroxyisobutanoyl-CoA (2-hydroxyisobutyryl-CoA) or (2E)-butenoyl-CoA (crotonyl-CoA), and is able to mediate protein 2-hydroxyisobutyrylation and crotonylation, respectively. This Kluyveromyces lactis (strain ATCC 8585 / CBS 2359 / DSM 70799 / NBRC 1267 / NRRL Y-1140 / WM37) (Yeast) protein is Histone acetyltransferase ESA1 (ESA1).